The sequence spans 909 residues: WD repeat-containing protein 20 homolog (909 aa).

Positions 58-132 (SPAQGKLGSD…SAGNNTVEAR (75 aa)) are disordered. Low complexity-rich tracts occupy residues 80–107 (GANT…AISN) and 115–127 (SHSN…AGNN). 4 WD repeats span residues 248 to 288 (IDKT…AATA), 321 to 362 (TDNC…GIAR), 363 to 402 (SYFG…VVAR), and 470 to 517 (ADRN…LRHP). Disordered stretches follow at residues 458 to 483 (FEGF…FRSD), 554 to 628 (SGQA…AGSV), 661 to 699 (SDSI…NSGS), 720 to 739 (SEKK…RQHR), and 749 to 775 (NQHN…GHSS). Composition is skewed to polar residues over residues 555–569 (GQAT…SCSP) and 595–606 (TANCTISSQSSP). 2 stretches are compositionally biased toward low complexity: residues 612-628 (EAAT…AGSV) and 673-699 (GQRP…NSGS). A WD 5 repeat occupies 856–893 (IAHERLTALIFREDCFLTACQDGFIYTWARPGHATHAT).

In terms of assembly, component of the Usp12-46 deubiquitylase complex consisting of Usp12-46, Wdr20 and Uaf1; regulatory subunit that, together with Uaf1, stabilizes Usp12-46. The Usp12-46 deubiquitylase complex associates with arr/arrow; the interaction leads to deubiquitination and stabilization of arr/arrow.

Regulatory component of the Usp12-46 deubiquitylase complex. This complex deubiquitylates the wg/wingless-signaling receptor arr/arrow, which stabilizes the receptor and increases its concentration at the cell surface; this enhances the sensitivity of cells to wg/wingless-signal stimulation. This increases the amplitude and spatial range of the signaling response to the wg/wingless morphogen gradient, facilitating the precise concentration-dependent regulation of its target genes. Required for wg/wingless-mediated signaling in the wing imaginal disc and for wg/wingless-dependent regulation of intestinal stem cell proliferation. This is WD repeat-containing protein 20 homolog from Drosophila melanogaster (Fruit fly).